The following is a 176-amino-acid chain: Acireductone dioxygenase (176 aa).

The segment at 1 to 21 (MKAYWYDNKPGDQREPHDSGR) is disordered. The segment covering 9–20 (KPGDQREPHDSG) has biased composition (basic and acidic residues). Residues histidine 81, histidine 83, glutamate 87, and histidine 126 each contribute to the Fe(2+) site. Residues histidine 81, histidine 83, glutamate 87, and histidine 126 each coordinate Ni(2+).

This sequence belongs to the acireductone dioxygenase (ARD) family. The cofactor is Fe(2+). Ni(2+) is required as a cofactor.

The protein resides in the cytoplasm. The protein localises to the nucleus. It catalyses the reaction 1,2-dihydroxy-5-(methylsulfanyl)pent-1-en-3-one + O2 = 4-methylsulfanyl-2-oxobutanoate + formate + 2 H(+). The enzyme catalyses 1,2-dihydroxy-5-(methylsulfanyl)pent-1-en-3-one + O2 = 3-(methylsulfanyl)propanoate + CO + formate + 2 H(+). It functions in the pathway amino-acid biosynthesis; L-methionine biosynthesis via salvage pathway; L-methionine from S-methyl-5-thio-alpha-D-ribose 1-phosphate: step 5/6. Catalyzes 2 different reactions between oxygen and the acireductone 1,2-dihydroxy-3-keto-5-methylthiopentene (DHK-MTPene) depending upon the metal bound in the active site. Fe-containing acireductone dioxygenase (Fe-ARD) produces formate and 2-keto-4-methylthiobutyrate (KMTB), the alpha-ketoacid precursor of methionine in the methionine recycle pathway. Ni-containing acireductone dioxygenase (Ni-ARD) produces methylthiopropionate, carbon monoxide and formate, and does not lie on the methionine recycle pathway. This chain is Acireductone dioxygenase (adi1), found in Aspergillus fumigatus (strain ATCC MYA-4609 / CBS 101355 / FGSC A1100 / Af293) (Neosartorya fumigata).